Here is a 321-residue protein sequence, read N- to C-terminus: UDP-N-acetylenolpyruvoylglucosamine reductase (321 aa).

Positions 36 to 203 (FRAGGLAEVM…TGALFEGYPE (168 aa)) constitute an FAD-binding PCMH-type domain. Arginine 183 is an active-site residue. Serine 232 functions as the Proton donor in the catalytic mechanism. Residue glutamate 302 is part of the active site.

It belongs to the MurB family. FAD is required as a cofactor.

The protein resides in the cytoplasm. The catalysed reaction is UDP-N-acetyl-alpha-D-muramate + NADP(+) = UDP-N-acetyl-3-O-(1-carboxyvinyl)-alpha-D-glucosamine + NADPH + H(+). Its pathway is cell wall biogenesis; peptidoglycan biosynthesis. Its function is as follows. Cell wall formation. This Agrobacterium fabrum (strain C58 / ATCC 33970) (Agrobacterium tumefaciens (strain C58)) protein is UDP-N-acetylenolpyruvoylglucosamine reductase.